We begin with the raw amino-acid sequence, 251 residues long: Triosephosphate isomerase (251 aa).

Residue 9–11 (NWK) participates in substrate binding. The active-site Electrophile is His95. Catalysis depends on Glu167, which acts as the Proton acceptor. Substrate is bound by residues Gly173, Ser213, and 234–235 (GG).

This sequence belongs to the triosephosphate isomerase family. As to quaternary structure, homodimer.

The protein localises to the cytoplasm. It catalyses the reaction D-glyceraldehyde 3-phosphate = dihydroxyacetone phosphate. Its pathway is carbohydrate biosynthesis; gluconeogenesis. It functions in the pathway carbohydrate degradation; glycolysis; D-glyceraldehyde 3-phosphate from glycerone phosphate: step 1/1. Functionally, involved in the gluconeogenesis. Catalyzes stereospecifically the conversion of dihydroxyacetone phosphate (DHAP) to D-glyceraldehyde-3-phosphate (G3P). This is Triosephosphate isomerase from Geotalea uraniireducens (strain Rf4) (Geobacter uraniireducens).